Here is a 428-residue protein sequence, read N- to C-terminus: Proline--tRNA ligase (428 aa).

It belongs to the class-II aminoacyl-tRNA synthetase family. ProS type 2 subfamily. As to quaternary structure, homodimer.

It is found in the cytoplasm. The enzyme catalyses tRNA(Pro) + L-proline + ATP = L-prolyl-tRNA(Pro) + AMP + diphosphate. In terms of biological role, catalyzes the attachment of proline to tRNA(Pro) in a two-step reaction: proline is first activated by ATP to form Pro-AMP and then transferred to the acceptor end of tRNA(Pro). The sequence is that of Proline--tRNA ligase from Rickettsia typhi (strain ATCC VR-144 / Wilmington).